The chain runs to 103 residues: Leukocyte cysteine proteinase inhibitor 1 (103 aa).

Blocked amino end (Met); partial is present on Met-1. The interval 1–20 is disordered; that stretch reads MESEEMLAGGLTEPRPATPE. A Secondary area of contact motif is present at residues 51-55; it reads QVVAG.

This sequence belongs to the cystatin family.

It localises to the cytoplasm. Potent inhibitor of cathepsins L and S, and papain. This Sus scrofa (Pig) protein is Leukocyte cysteine proteinase inhibitor 1.